A 326-amino-acid chain; its full sequence is Acetyl-coenzyme A carboxylase carboxyl transferase subunit beta (326 aa).

The CoA carboxyltransferase N-terminal domain maps to 29–298 (LWIKCEACGT…TLISDESLET (270 aa)). Zn(2+) contacts are provided by C33, C36, C52, and C55. A C4-type zinc finger spans residues 33 to 55 (CEACGTLTYTKDLQANQMVCPEC). Positions 302–326 (CHLPFQAESHNLSTTDNKIQPTPQG) are disordered. The segment covering 309–326 (ESHNLSTTDNKIQPTPQG) has biased composition (polar residues).

This sequence belongs to the AccD/PCCB family. In terms of assembly, acetyl-CoA carboxylase is a heterohexamer composed of biotin carboxyl carrier protein (AccB), biotin carboxylase (AccC) and two subunits each of ACCase subunit alpha (AccA) and ACCase subunit beta (AccD). It depends on Zn(2+) as a cofactor.

It is found in the cytoplasm. The enzyme catalyses N(6)-carboxybiotinyl-L-lysyl-[protein] + acetyl-CoA = N(6)-biotinyl-L-lysyl-[protein] + malonyl-CoA. The protein operates within lipid metabolism; malonyl-CoA biosynthesis; malonyl-CoA from acetyl-CoA: step 1/1. In terms of biological role, component of the acetyl coenzyme A carboxylase (ACC) complex. Biotin carboxylase (BC) catalyzes the carboxylation of biotin on its carrier protein (BCCP) and then the CO(2) group is transferred by the transcarboxylase to acetyl-CoA to form malonyl-CoA. This is Acetyl-coenzyme A carboxylase carboxyl transferase subunit beta from Trichodesmium erythraeum (strain IMS101).